Consider the following 475-residue polypeptide: UDP-glycosyltransferase 708A6 (475 aa).

UDP-alpha-D-glucose contacts are provided by residues Ser-286, 348–349 (WV), 366–374 (HCGWNSLTE), and 388–391 (FGDQ).

Belongs to the UDP-glycosyltransferase family. In terms of tissue distribution, expressed in radicles, hypocotyls and juvenile leaves. Expressed at low levels in roots.

Its function is as follows. Bifunctional glycosyltransferase that can produce both C- and O-glycosidated flavonoids. Converts 2-hydroxynaringenin to isovitexin. Converts eriodictyol to orientin and isoorientin. Converts naringenin and eriodictyol to naringenin 7-O-glucoside and eriodictyol 7-O-glucoside, respectively. In Zea mays (Maize), this protein is UDP-glycosyltransferase 708A6.